The primary structure comprises 148 residues: Lysozyme C-3 (148 aa).

The first 18 residues, 1-18, serve as a signal peptide directing secretion; that stretch reads MKTLLVLALLLLSVSVQA. The 130-residue stretch at 19-148 folds into the C-type lysozyme domain; the sequence is KVYDRCEFAR…VSQYIRGCKL (130 aa). Cystine bridges form between Cys24-Cys146, Cys48-Cys134, Cys83-Cys99, and Cys95-Cys113. Catalysis depends on residues Glu53 and Asp71.

This sequence belongs to the glycosyl hydrolase 22 family. In terms of assembly, monomer.

It is found in the secreted. The enzyme catalyses Hydrolysis of (1-&gt;4)-beta-linkages between N-acetylmuramic acid and N-acetyl-D-glucosamine residues in a peptidoglycan and between N-acetyl-D-glucosamine residues in chitodextrins.. In terms of biological role, lysozymes have primarily a bacteriolytic function; those in tissues and body fluids are associated with the monocyte-macrophage system and enhance the activity of immunoagents. The sequence is that of Lysozyme C-3 from Sus scrofa (Pig).